Consider the following 212-residue polypeptide: Small ribosomal subunit protein uS5 (212 aa).

Residues 48-111 (LDDEVLDINM…EVAKLNIIDV (64 aa)) enclose the S5 DRBM domain.

It belongs to the universal ribosomal protein uS5 family. As to quaternary structure, part of the 30S ribosomal subunit. Contacts protein S4.

With S4 and S12 plays an important role in translational accuracy. The chain is Small ribosomal subunit protein uS5 from Halobacterium salinarum (strain ATCC 700922 / JCM 11081 / NRC-1) (Halobacterium halobium).